Consider the following 299-residue polypeptide: Ubiquinol-cytochrome c reductase complex assembly factor 1 (299 aa).

It belongs to the CBP3 family. In terms of assembly, interacts with UQCC2. Interacts with UQCC3. Forms a complex, named COMB/coordinator of mitochondrial CYTB biogenesis, composed of UQCC1, UQCC2, UQCC4, UQCC5 and UQCC6; stabilizes nascent cytochrome b/MT-CYB and promotes its membrane insertion. Forms a complex, named COMB/coordinator of mitochondrial CYTB biogenesis, composed of UQCC1, UQCC2, UQCC4, UQCC5 and UQCC6; stabilizes nascent cytochrome b/MT-CYB and promotes its membrane insertion. Forms a complex, named COMA, composed of UQCC1, UQCC2 and UQCC4; activates MT-CYB translation. Forms a complex, named COMC, composed of UQCC1, UQCC2; UQCC3 and UQCC4; mediates MT-CYB hemylation and association with the first nuclear-encoded CIII subunit UQCRQ.

The protein localises to the mitochondrion inner membrane. It is found in the cytoplasmic vesicle. Its function is as follows. Required for the assembly of the ubiquinol-cytochrome c reductase complex (mitochondrial respiratory chain complex III or cytochrome b-c1 complex). Involved in cytochrome b translation and/or stability. This is Ubiquinol-cytochrome c reductase complex assembly factor 1 (UQCC1) from Homo sapiens (Human).